The following is a 332-amino-acid chain: Centrosomal AT-AC splicing factor (332 aa).

A required for centrosome location region spans residues 1–169; that stretch reads MAPAQRCPLC…QSRQEVVRSV (169 aa). Lys31 is modified (N6-acetyllysine; by NAT10). Residues 137 to 168 adopt a coiled-coil conformation; it reads LDSYEEKEDKVIKEMAAQIREVEQSRQEVVRS. The interval 169–213 is disordered; it reads VLEPQAVPDPEEGSSAPRSWKGMNSQVASSLQQPSNLDLPPAPEL. Over residues 190 to 204 the composition is skewed to polar residues; that stretch reads GMNSQVASSLQQPSN.

As to quaternary structure, interacts with SASS6; the interaction increases with CENATAC acetylation. Post-translationally, acetylated. Acetylation oscillates throughout the cell cycle, and the acetylation state at Lys-31 is regulated by the deacetylase SIRT1 and the acetyltransferase NAT10. Deacetylated CENATAC is responsible for its centrosome targeting, and acetylated CENATAC promotes SASS6 degradation by enhancing the binding affinity of SASS6 for APC/C E3 ubiquitin-protein ligase complex/FZR1.

The protein resides in the cytoplasm. It localises to the cytoskeleton. The protein localises to the microtubule organizing center. Its subcellular location is the centrosome. Functionally, component of the minor spliceosome that promotes splicing of a specific, rare minor intron subtype. Negative regulator of centrosome duplication. Constrains centriole number by modulating the degradation of the centrosome-duplication-associated protein SASS6 in an acetylation-dependent manner. SIRT1 deacetylates CENATAC in G1 phase, allowing for SASS6 accumulation on the centrosome and subsequent procentriole assembly. The CENATAC acetylation level is restored in mitosis by NAT10, promoting SASS6 proteasome degradation by facilitating SASS6 binding to APC/C E3 ubiquitin-protein ligase complex/FZR1. This is Centrosomal AT-AC splicing factor from Homo sapiens (Human).